The following is a 346-amino-acid chain: Partitioning defective 6 homolog alpha (346 aa).

The interval 1 to 116 (MARPQRTPAR…SNSLQRRKKG (116 aa)) is interaction with PRKCI and PRKCZ. The region spanning 15-95 (IVEVKSKFDA…PPLRLLVQKR (81 aa)) is the PB1 domain. Residues 126–253 (RTRPPLLISL…VTVKPANQRN (128 aa)) are interaction with PARD3 and CDC42. The region spanning 133–150 (ISLPQDFRQVSSVIDVDL) is the Pseudo-CRIB domain. A PDZ domain is found at 157–250 (RVRLHKHGSD…NLIVTVKPAN (94 aa)). Positions 257–346 (RGASGRLTGP…IRGDGSGFSL (90 aa)) are disordered. Phosphoserine is present on residues serine 278 and serine 345.

It belongs to the PAR6 family. As to quaternary structure, interacts with MAP2K5. Interacts with PARD3. Interacts with GTP-bound forms of CDC42, RHOQ/TC10 and RAC1. Interacts with the N-terminal part of PRKCI and PRKCZ. Part of a complex with PARD3, CDC42 or RAC1 and PRKCI or PRKCZ. Part of a complex with LLGL1 and PRKCI. Interacts with human T-cell leukemia virus type I TAX protein. Interacts with PALS1 and CRB3. Interacts with TGFBR1; involved in TGF-beta induced epithelial to mesenchymal transition. Interacts with ECT2 ('Thr-359' phosphorylated form) and PRKCI. Interacts with DCTN1 and PCM1. Post-translationally, phosphorylated by the TGF-beta receptor. Ubiquitinated by the SCF(FBXO31) complex, leading to its proteasomal degradation. As to expression, expressed in pancreas, skeletal muscle, brain and heart. Weakly expressed in kidney and placenta.

It localises to the cytoplasm. The protein resides in the cell membrane. Its subcellular location is the cell projection. It is found in the ruffle. The protein localises to the cell junction. It localises to the tight junction. The protein resides in the cytoskeleton. Its subcellular location is the microtubule organizing center. It is found in the centrosome. The protein localises to the centriolar satellite. Its function is as follows. Adapter protein involved in asymmetrical cell division and cell polarization processes. Probably involved in the formation of epithelial tight junctions. Association with PARD3 may prevent the interaction of PARD3 with F11R/JAM1, thereby preventing tight junction assembly. The PARD6-PARD3 complex links GTP-bound Rho small GTPases to atypical protein kinase C proteins. Regulates centrosome organization and function. Essential for the centrosomal recruitment of key proteins that control centrosomal microtubule organization. The chain is Partitioning defective 6 homolog alpha (PARD6A) from Homo sapiens (Human).